Reading from the N-terminus, the 586-residue chain is Glutathione S-transferase C-terminal domain-containing protein homolog (586 aa).

In terms of domain architecture, GST C-terminal spans leucine 121 to leucine 276.

Belongs to the GSTCD family.

The sequence is that of Glutathione S-transferase C-terminal domain-containing protein homolog from Drosophila pseudoobscura pseudoobscura (Fruit fly).